Here is a 187-residue protein sequence, read N- to C-terminus: Phosphatidylethanolamine-binding protein 1 (187 aa).

Phosphoserine is present on residues serine 6 and serine 13. Phosphothreonine is present on threonine 42. A phosphoserine mark is found at serine 52 and serine 98. Residues 93–134 (KGGNISSGTVLSDYVGSGPPKGTGLHRYVWLVYEQDGPLKCD) are interaction with RAF1.

Belongs to the phosphatidylethanolamine-binding protein family. In terms of assembly, has a tendency to form dimers by disulfide cross-linking. Interacts with RAF1 and this interaction is enhanced if RAF1 is phosphorylated on residues 'Ser-338', 'Ser-339', 'Tyr-340' and 'Tyr-341'. Interacts with ALOX15; in response to IL13/interleukin-13, prevents the interaction of PEBP1 with RAF1 to activate the ERK signaling cascade.

It localises to the cytoplasm. Binds ATP, opioids and phosphatidylethanolamine. Has lower affinity for phosphatidylinositol and phosphatidylcholine. Serine protease inhibitor which inhibits thrombin, neuropsin and chymotrypsin but not trypsin, tissue type plasminogen activator and elastase. Inhibits the kinase activity of RAF1 by inhibiting its activation and by dissociating the RAF1/MEK complex and acting as a competitive inhibitor of MEK phosphorylation. Functionally, HCNP may be involved in the function of the presynaptic cholinergic neurons of the central nervous system. HCNP increases the production of choline acetyltransferase but not acetylcholinesterase. Seems to be mediated by a specific receptor. The polypeptide is Phosphatidylethanolamine-binding protein 1 (PEBP1) (Oryctolagus cuniculus (Rabbit)).